Here is a 333-residue protein sequence, read N- to C-terminus: Minor fimbrium tip subunit MfA4 (333 aa).

The first 18 residues, 1-18 (MKKYLLYASLLTSVLLFS), serve as a signal peptide directing secretion. Cys19 carries the N-palmitoyl cysteine lipid modification. Cys19 carries the S-diacylglycerol cysteine lipid modification. The propeptide occupies 19–53 (CSKNNPSEPVEDRSIEISIRVDDFTKTGETVRYER).

This sequence belongs to the bacteroidetes fimbrillin superfamily. FimA/Mfa1 family. In terms of assembly, component of the fimbrium tip. Minor fimbriae are composed of a structural subunit, most often Mfa1, and the accessory subunits Mfa3, Mfa4 and Mfa5. Mfa4 is required for Mfa3 and Mfa5 insertion into the fimbrium. Fimbrium assembly occurs by linear, head-to-tail oligomerization of fimbrial subunits. This is mediated via insertion of a C-terminal beta-strand from one subunit into a groove in the N-terminal domain of the following subunit.

It localises to the fimbrium. The protein resides in the cell outer membrane. In terms of biological role, tip subunit of the minor fimbriae. These filamentous pili are attached to the cell surface; they mediate biofilm formation, adhesion onto host cells and onto other bacteria that are part of the oral microbiome. They play an important role in invasion of periodontal tissues and are recognized as major virulence factors. The chain is Minor fimbrium tip subunit MfA4 from Porphyromonas gingivalis (strain ATCC 33277 / DSM 20709 / CIP 103683 / JCM 12257 / NCTC 11834 / 2561).